The following is a 145-amino-acid chain: MLNISHYKIIAIGKIKKKWIQEGIEMYLKRLPGLEVKEIKDSTQLKEEHTIKEIISKNEFLVTLNENGQSFTSKQLATKLLNSHNQNITFVIGGASGLSSSLNNLASWQLSLSPLTFPHEIARLLLIEQLYRAKAITQGGPYHKE.

Residues Leu-64, Gly-93, and 112–117 (LSPLTF) contribute to the S-adenosyl-L-methionine site.

This sequence belongs to the RNA methyltransferase RlmH family. In terms of assembly, homodimer.

It localises to the cytoplasm. It catalyses the reaction pseudouridine(1915) in 23S rRNA + S-adenosyl-L-methionine = N(3)-methylpseudouridine(1915) in 23S rRNA + S-adenosyl-L-homocysteine + H(+). Functionally, specifically methylates the pseudouridine at position 1915 (m3Psi1915) in 23S rRNA. The sequence is that of Ribosomal RNA large subunit methyltransferase H from Prochlorococcus marinus (strain NATL2A).